Consider the following 245-residue polypeptide: MLLIPAIDLKEGRCVRLKQGLMEEATVFSDSPADTALHWFEQGARRLHLVDLNGAFAGVPQNLPAIKDILAAVAKDIPVQLGGGMRDLKTIGQYLDLGLNDVIIGTAAVKNPDLVREACKAFPGRIIVGLDAKDGMAAIDGWATVTGHHVIDLAKRFEDDGVNSIIYTDIGRDGMMSGVNIDATVKLAQSVRIPVIASGGLTGLDDIPALCAAEKHGVAGAITGRAIYEGSIDFAQAQQLADSLD.

Catalysis depends on D8, which acts as the Proton acceptor. D131 serves as the catalytic Proton donor.

Belongs to the HisA/HisF family.

It is found in the cytoplasm. The catalysed reaction is 1-(5-phospho-beta-D-ribosyl)-5-[(5-phospho-beta-D-ribosylamino)methylideneamino]imidazole-4-carboxamide = 5-[(5-phospho-1-deoxy-D-ribulos-1-ylimino)methylamino]-1-(5-phospho-beta-D-ribosyl)imidazole-4-carboxamide. Its pathway is amino-acid biosynthesis; L-histidine biosynthesis; L-histidine from 5-phospho-alpha-D-ribose 1-diphosphate: step 4/9. In Neisseria gonorrhoeae (strain NCCP11945), this protein is 1-(5-phosphoribosyl)-5-[(5-phosphoribosylamino)methylideneamino] imidazole-4-carboxamide isomerase.